The chain runs to 306 residues: Tryptophan 2,3-dioxygenase (306 aa).

Substrate is bound by residues 75 to 79 (FIIQH), Y137, and R141. H264 is a heme binding site. A substrate-binding site is contributed by T278.

Belongs to the tryptophan 2,3-dioxygenase family. In terms of assembly, homotetramer. Requires heme as cofactor.

The enzyme catalyses L-tryptophan + O2 = N-formyl-L-kynurenine. It functions in the pathway amino-acid degradation; L-tryptophan degradation via kynurenine pathway; L-kynurenine from L-tryptophan: step 1/2. In terms of biological role, heme-dependent dioxygenase that catalyzes the oxidative cleavage of the L-tryptophan (L-Trp) pyrrole ring and converts L-tryptophan to N-formyl-L-kynurenine. Catalyzes the oxidative cleavage of the indole moiety. This is Tryptophan 2,3-dioxygenase from Paraburkholderia phytofirmans (strain DSM 17436 / LMG 22146 / PsJN) (Burkholderia phytofirmans).